Reading from the N-terminus, the 288-residue chain is Store-operated calcium entry regulator STIMATE (288 aa).

Residues 1–28 are Cytoplasmic-facing; that stretch reads MQGPGGNVSRGLPGGPASTVASGAGRCE. 3 helical membrane-spanning segments follow: residues 29–49, 69–89, and 102–122; these read SGAL…VVAF, IWFL…FANV, and LYLI…YVGV. Residues 149 to 153 carry the GXXXG motif motif; it reads GAWVG. 2 helical membrane passes run 156–176 and 194–214; these read ALYI…LLIL and LAIV…WVVD. Residues 215–288 are Cytoplasmic-facing; the sequence is NFLMRKGKTK…KKKHRFGLPV (74 aa). The interval 228 to 288 is disordered; sequence EERGANQDSR…KKKHRFGLPV (61 aa). Positions 241–246 are required for localization in the endoplasmic reticulum; it reads KVRYRR. Over residues 261 to 272 the composition is skewed to acidic residues; sequence ADDEMEESDAEE. A compositionally biased stretch (basic residues) spans 277-288; sequence PVKKKHRFGLPV.

The protein belongs to the STIMATE family. As to quaternary structure, homooligomer. Interacts with STIM1.

It is found in the endoplasmic reticulum membrane. Acts as a regulator of store-operated Ca(2+) entry (SOCE) at junctional sites that connect the endoplasmic reticulum (ER) and plasma membrane (PM), called ER-plasma membrane (ER-PM) junction or cortical ER. SOCE is a Ca(2+) influx following depletion of intracellular Ca(2+) stores. Acts by interacting with STIM1, promoting STIM1 conformational switch. Involved in STIM1 relocalization to ER-PM junctions. Contributes to the maintenance and reorganization of store-dependent ER-PM junctions. The polypeptide is Store-operated calcium entry regulator STIMATE (Rattus norvegicus (Rat)).